The primary structure comprises 617 residues: Sphingosine kinase 2 (617 aa).

A required for binding to sulfatide and phosphoinositides and for membrane localization region spans residues 1–140 (MAPPPLLPVA…LSGDQEITPE (140 aa)). The Nuclear localization signal motif lies at 87–95 (RGRRGGRRR). The DAGKc domain maps to 143–290 (PRKPRLLILV…LDLLSVTLAS (148 aa)). ATP contacts are provided by residues 153-155 (NPF) and 185-189 (TERQN). 210-213 (SGDG) serves as a coordination point for substrate. Catalysis depends on D212, which acts as the Proton donor/acceptor. Residues E217 and 242 to 244 (GSG) contribute to the ATP site. Residue D309 coordinates substrate. ATP contacts are provided by R316 and R322. Phosphoserine occurs at positions 358 and 364. Positions 371 to 472 (APAPAATHSP…GFLPPTHSAP (102 aa)) are disordered. T377 carries the post-translational modification Phosphothreonine. The Nuclear export signal motif lies at 381-390 (LHRSVSDLPL). Phosphoserine occurs at positions 384 and 386. Residues 412–426 (NGGGPELTGDWGGAG) are compositionally biased toward gly residues. A Phosphothreonine modification is found at T578. Residue 586 to 588 (DGE) coordinates ATP.

Interacts with histone H3. Interacts with HDAC1, HDAC2, MBD2 and SIN3A. Interacts with EEF1A1; the interaction enhances SPHK2 kinase activity. Interacts with PHB2. Requires Mg(2+) as cofactor. In terms of processing, phosphorylated by PKD on Ser-384 and Ser-386 upon PMA treatment. Phosphorylation induces export from the nucleus to the cytoplasm. Phosphorylated by MAPK1 and MAPK2 at Thr-578, phosphorylation is induced by agonists such as EGF and PMA and increases kinase activity. Post-translationally, cleaved by CASP1 in apoptotic cells. The truncated form is released from cells. As to expression, expressed in heart, brain, liver, kidney and testis. Expressed by mast cells (at protein level). In the substantia nigra, expressed by dopaminergic neurons (at protein level).

It is found in the lysosome membrane. The protein resides in the cytoplasm. The protein localises to the cell membrane. Its subcellular location is the endoplasmic reticulum. It localises to the nucleus. It is found in the mitochondrion inner membrane. The catalysed reaction is a sphingoid base + ATP = a sphingoid 1-phosphate + ADP + H(+). It carries out the reaction sphing-4-enine + ATP = sphing-4-enine 1-phosphate + ADP + H(+). The enzyme catalyses sphinganine + ATP = sphinganine 1-phosphate + ADP + H(+). It catalyses the reaction (4R)-hydroxysphinganine + ATP = (4R)-hydroxysphinganine 1-phosphate + ADP + H(+). In terms of biological role, catalyzes the phosphorylation of sphingosine to form sphingosine-1-phosphate (SPP), a lipid mediator with both intra- and extracellular functions. Also acts on D-erythro-dihydrosphingosine, D-erythro-sphingosine and L-threo-dihydrosphingosine. Binds phosphoinositides. In contrast to prosurvival SPHK1, has a positive effect on intracellular ceramide levels, inhibits cells growth and enhances apoptosis. In mitochondria, is important for cytochrome-c oxidase assembly and mitochondrial respiration. The SPP produced in mitochondria binds PHB2 and modulates the regulation via PHB2 of complex IV assembly and respiration. In nucleus, plays a role in epigenetic regulation of gene expression. Interacts with HDAC1 and HDAC2 and, through SPP production, inhibits their enzymatic activity, preventing the removal of acetyl groups from lysine residues with histones. Up-regulates acetylation of histone H3-K9, histone H4-K5 and histone H2B-K12. In nucleus, may have an inhibitory effect on DNA synthesis and cell cycle. In mast cells, is the main regulator of SPP production which mediates calcium influx, NF-kappa-B activation, cytokine production, such as TNF and IL6, and degranulation of mast cells. In dopaminergic neurons, is involved in promoting mitochondrial functions regulating ATP and ROS levels. Also involved in the regulation of glucose and lipid metabolism. The chain is Sphingosine kinase 2 from Mus musculus (Mouse).